The following is a 539-amino-acid chain: CTP synthase (539 aa).

The tract at residues 1–268 (MADTKYIFVT…DETVLRKVGL (268 aa)) is amidoligase domain. S15 is a binding site for CTP. S15 contacts UTP. 16 to 21 (SLGKGI) contributes to the ATP binding site. Y56 lines the L-glutamine pocket. D73 provides a ligand contact to ATP. Mg(2+) contacts are provided by D73 and E143. CTP-binding positions include 150–152 (DIE), 189–194 (KTKPTQ), and K225. Residues 189 to 194 (KTKPTQ) and K225 each bind UTP. Residues 294 to 536 (TIALVGKYVE…IREAIKTRKK (243 aa)) enclose the Glutamine amidotransferase type-1 domain. G356 contributes to the L-glutamine binding site. The active-site Nucleophile; for glutamine hydrolysis is the C383. Residues 384 to 387 (LGMQ), E407, and R464 contribute to the L-glutamine site. Catalysis depends on residues H509 and E511.

Belongs to the CTP synthase family. In terms of assembly, homotetramer.

The enzyme catalyses UTP + L-glutamine + ATP + H2O = CTP + L-glutamate + ADP + phosphate + 2 H(+). It catalyses the reaction L-glutamine + H2O = L-glutamate + NH4(+). It carries out the reaction UTP + NH4(+) + ATP = CTP + ADP + phosphate + 2 H(+). It participates in pyrimidine metabolism; CTP biosynthesis via de novo pathway; CTP from UDP: step 2/2. Allosterically activated by GTP, when glutamine is the substrate; GTP has no effect on the reaction when ammonia is the substrate. The allosteric effector GTP functions by stabilizing the protein conformation that binds the tetrahedral intermediate(s) formed during glutamine hydrolysis. Inhibited by the product CTP, via allosteric rather than competitive inhibition. In terms of biological role, catalyzes the ATP-dependent amination of UTP to CTP with either L-glutamine or ammonia as the source of nitrogen. Regulates intracellular CTP levels through interactions with the four ribonucleotide triphosphates. The protein is CTP synthase of Porphyromonas gingivalis (strain ATCC BAA-308 / W83).